The following is a 558-amino-acid chain: Urocanate hydratase (558 aa).

NAD(+) contacts are provided by residues 53–54 (GG), Gln-131, 177–179 (GMG), Glu-197, Arg-202, 243–244 (NA), 264–268 (QTSAH), 274–275 (YL), and Tyr-323. Cys-411 is a catalytic residue. Residue Gly-493 participates in NAD(+) binding.

The protein belongs to the urocanase family. NAD(+) is required as a cofactor.

It localises to the cytoplasm. The enzyme catalyses 4-imidazolone-5-propanoate = trans-urocanate + H2O. Its pathway is amino-acid degradation; L-histidine degradation into L-glutamate; N-formimidoyl-L-glutamate from L-histidine: step 2/3. Its function is as follows. Catalyzes the conversion of urocanate to 4-imidazolone-5-propionate. This is Urocanate hydratase from Idiomarina loihiensis (strain ATCC BAA-735 / DSM 15497 / L2-TR).